We begin with the raw amino-acid sequence, 329 residues long: LGINGKVLRIFDKRTQQKFALKMLQDCPKARREVELHWRASQCPHIVDIVDVYENLYAGRKCLLIVMECLDGGELFSRIQDRGDQAFTEREASEIMKSIGEAIQYLHSINIAHRDVKPENLLYTSKRPNAILKLTDFGFAKETTSHNSLTTPCYTPYYVAPEVLGPEKYDKSCDMWSLGVIMYILLCGYPPFYSNHGLAISPGMKTRIRMGQYEFPNPEWSEVSEEVKMLIRNLLKTEPTQRMTITEFMNHPWIMQSTKVPQTPLHTSRVLKEDKERWEDVKEEMTSALATMRVDYEQIKIKKIEDASNPLLLKRRKKARAVEAAALAH.

Residues 1-7 and K22 each bind ATP; that span reads LGINGKV. Positions 1–254 constitute a Protein kinase domain; sequence LGINGKVLRI…ITEFMNHPWI (254 aa). A staurosporine-binding site is contributed by 68 to 70; sequence ECL. D115 acts as the Proton acceptor in catalysis. Residue T151 is modified to Phosphothreonine; by MAPK14. S201 carries the post-translational modification Phosphoserine; by MAPK14. Residue S257 is modified to Phosphoserine; by autocatalysis. The interval 257 to 293 is autoinhibitory helix; that stretch reads STKVPQTPLHTSRVLKEDKERWEDVKEEMTSALATMR. T263 bears the Phosphothreonine; by MAPK14 mark. K282 participates in a covalent cross-link: Glycyl lysine isopeptide (Lys-Gly) (interchain with G-Cter in SUMO). The Nuclear export signal (NES) motif lies at 285-294; it reads MTSALATMRV. The p38 MAPK-binding site stretch occupies residues 295 to 319; the sequence is DYEQIKIKKIEDASNPLLLKRRKKA. 2 short sequence motifs (bipartite nuclear localization signal) span residues 300 to 303 and 314 to 318; these read KIKK and KRRKK.

The protein belongs to the protein kinase superfamily. CAMK Ser/Thr protein kinase family. Heterodimer with p38-alpha/MAPK14; this heterodimer forms a stable complex: molecules are positioned 'face to face' so that the ATP-binding sites of both kinases are at the heterodimer interface. Interacts with PHC2. Interacts with HSF1. In terms of processing, sumoylation inhibits the protein kinase activity. Phosphorylated and activated by MAP kinase p38-alpha/MAPK14 at Thr-151, Ser-201 and Thr-263.

Its subcellular location is the cytoplasm. The protein localises to the nucleus. It carries out the reaction L-seryl-[protein] + ATP = O-phospho-L-seryl-[protein] + ADP + H(+). The catalysed reaction is L-threonyl-[protein] + ATP = O-phospho-L-threonyl-[protein] + ADP + H(+). Activated following phosphorylation by p38-alpha/MAPK14 following various stresses. Inhibited following sumoylation. Specifically inhibited by pyrrolopyridine inhibitors. Functionally, stress-activated serine/threonine-protein kinase involved in cytokine production, endocytosis, reorganization of the cytoskeleton, cell migration, cell cycle control, chromatin remodeling, DNA damage response and transcriptional regulation. Following stress, it is phosphorylated and activated by MAP kinase p38-alpha/MAPK14, leading to phosphorylation of substrates. Phosphorylates serine in the peptide sequence, Hyd-X-R-X(2)-S, where Hyd is a large hydrophobic residue. Phosphorylates ALOX5, CDC25B, CDC25C, CEP131, ELAVL1, HNRNPA0, HSP27/HSPB1, KRT18, KRT20, LIMK1, LSP1, PABPC1, PARN, PDE4A, RCSD1, RPS6KA3, TAB3 and TTP/ZFP36. Phosphorylates HSF1; leading to the interaction with HSP90 proteins and inhibiting HSF1 homotrimerization, DNA-binding and transactivation activities. Mediates phosphorylation of HSP27/HSPB1 in response to stress, leading to the dissociation of HSP27/HSPB1 from large small heat-shock protein (sHsps) oligomers and impairment of their chaperone activities and ability to protect against oxidative stress effectively. Involved in inflammatory response by regulating tumor necrosis factor (TNF) and IL6 production post-transcriptionally: acts by phosphorylating AU-rich elements (AREs)-binding proteins ELAVL1, HNRNPA0, PABPC1 and TTP/ZFP36, leading to regulation of the stability and translation of TNF and IL6 mRNAs. Phosphorylation of TTP/ZFP36, a major post-transcriptional regulator of TNF, promotes its binding to 14-3-3 proteins and reduces its ARE mRNA affinity, leading to inhibition of dependent degradation of ARE-containing transcripts. Phosphorylates CEP131 in response to cellular stress following ultraviolet irradiation which promotes binding of CEP131 to 14-3-3 proteins and inhibits formation of novel centriolar satellites. Also involved in late G2/M checkpoint following DNA damage through a process of post-transcriptional mRNA stabilization: following DNA damage, relocalizes from nucleus to cytoplasm and phosphorylates HNRNPA0 and PARN, leading to stabilization of GADD45A mRNA. Involved in toll-like receptor signaling pathway (TLR) in dendritic cells: required for acute TLR-induced macropinocytosis by phosphorylating and activating RPS6KA3. The protein is MAP kinase-activated protein kinase 2 (MAPKAPK2) of Cricetulus longicaudatus (Long-tailed dwarf hamster).